Reading from the N-terminus, the 331-residue chain is Beta-hexosaminidase (331 aa).

Residues Asp60, Arg68, Arg133, and 163 to 164 (KH) contribute to the substrate site. His176 serves as the catalytic Proton donor/acceptor. Asp247 functions as the Nucleophile in the catalytic mechanism.

This sequence belongs to the glycosyl hydrolase 3 family. NagZ subfamily.

It localises to the cytoplasm. It carries out the reaction Hydrolysis of terminal non-reducing N-acetyl-D-hexosamine residues in N-acetyl-beta-D-hexosaminides.. It participates in cell wall biogenesis; peptidoglycan recycling. Plays a role in peptidoglycan recycling by cleaving the terminal beta-1,4-linked N-acetylglucosamine (GlcNAc) from peptide-linked peptidoglycan fragments, giving rise to free GlcNAc, anhydro-N-acetylmuramic acid and anhydro-N-acetylmuramic acid-linked peptides. This Xanthomonas campestris pv. campestris (strain B100) protein is Beta-hexosaminidase.